We begin with the raw amino-acid sequence, 558 residues long: Formate--tetrahydrofolate ligase (558 aa).

Residue 66–73 (TPAGEGKT) participates in ATP binding.

Belongs to the formate--tetrahydrofolate ligase family.

It carries out the reaction (6S)-5,6,7,8-tetrahydrofolate + formate + ATP = (6R)-10-formyltetrahydrofolate + ADP + phosphate. Its pathway is one-carbon metabolism; tetrahydrofolate interconversion. This Neisseria gonorrhoeae (strain ATCC 700825 / FA 1090) protein is Formate--tetrahydrofolate ligase.